The chain runs to 161 residues: Nucleotide-binding protein PFL_4775 (161 aa).

The protein belongs to the YajQ family.

Its function is as follows. Nucleotide-binding protein. The chain is Nucleotide-binding protein PFL_4775 from Pseudomonas fluorescens (strain ATCC BAA-477 / NRRL B-23932 / Pf-5).